Consider the following 724-residue polypeptide: WD repeat-containing protein 91 (724 aa).

Residues 178–207 (FDSEVQRITSLQEDNEQLRQTVFALQGESR) adopt a coiled-coil conformation. Residues 249–365 (SRNFFSTFLP…PDQTDSANQT (117 aa)) are disordered. Composition is skewed to polar residues over residues 270–279 (GPQSSPTQSA) and 303–315 (SVSS…STSH). A Phosphoserine modification is found at serine 274. Residues 322–333 (QDHEKERKELFS) show a composition bias toward basic and acidic residues. Polar residues predominate over residues 349–365 (DTQTEAPPDQTDSANQT). WD repeat units lie at residues 389–428 (EHHS…QTKA), 431–471 (MSKS…CLYE), 499–532 (AHSG…QQLQ), 537–576 (PGPV…SALS), 579–618 (AHDG…VKQS), 641–679 (VQVP…AGLE), and 686–724 (GHKA…AQKP).

This sequence belongs to the WD repeat WDR91 family.

It localises to the early endosome membrane. It is found in the late endosome membrane. In terms of biological role, functions as a negative regulator of the PI3 kinase/PI3K activity associated with endosomal membranes. By modifying the phosphatidylinositol 3-phosphate/PtdInsP3 content of endosomal membranes may regulate endosome fusion, recycling, sorting and early to late endosome transport. This chain is WD repeat-containing protein 91 (wdr91), found in Danio rerio (Zebrafish).